A 635-amino-acid polypeptide reads, in one-letter code: Isethionate TRAP transporter permease protein DctMQ (635 aa).

Transmembrane regions (helical) follow at residues 38–58 (KPFL…QTLY), 75–95 (TEEM…PVAI), 117–137 (ISWI…LWQS), 154–174 (LQLP…LMAV), 192–212 (TVIG…ADYI), 217–237 (VLFG…IGLG), 266–286 (FPIM…AGGL), 299–319 (GALP…FAAI), 350–370 (AIVA…PFVV), 379–399 (IGKL…ALMA), 431–451 (WALM…MTPT), 453–473 (AAAL…RELS), 481–501 (VVEA…ATIF), 526–546 (IAIL…MEAL), 572–592 (IIMV…VNLF), and 609–629 (VLPL…VPAI).

The protein in the N-terminal section; belongs to the TRAP transporter small permease family. In the C-terminal section; belongs to the TRAP transporter large permease family. As to quaternary structure, the complex comprises the periplasmic solute receptor protein DctP, and the fused transmembrane protein DctMQ.

The protein resides in the cell inner membrane. Its pathway is organosulfur degradation; alkanesulfonate degradation. Functionally, part of the tripartite ATP-independent periplasmic (TRAP) transport system DctPQM involved in the uptake of isethionate (2-hydroxyethanesulfonate), which is then catabolized by enzymes encoded by adjacent genes in the locus. Thereby is involved in an anaerobic respiration pathway that converts the sulfonate isethionate to ammonia, acetate and sulfide. The chain is Isethionate TRAP transporter permease protein DctMQ from Oleidesulfovibrio alaskensis (strain ATCC BAA-1058 / DSM 17464 / G20) (Desulfovibrio alaskensis).